The sequence spans 195 residues: Guanylate kinase (195 aa).

In terms of domain architecture, Guanylate kinase-like spans 5–183 (GILFVISGPS…ALQKITAIII (179 aa)). 12-19 (GPSGVGKG) is a binding site for ATP.

The protein belongs to the guanylate kinase family.

Its subcellular location is the cytoplasm. The enzyme catalyses GMP + ATP = GDP + ADP. Its function is as follows. Essential for recycling GMP and indirectly, cGMP. This is Guanylate kinase from Syntrophomonas wolfei subsp. wolfei (strain DSM 2245B / Goettingen).